Here is a 581-residue protein sequence, read N- to C-terminus: Metal transporter Nramp7.1 (581 aa).

Residues asparagine 11 and asparagine 19 are each glycosylated (N-linked (GlcNAc...) asparagine). The next 7 helical transmembrane spans lie at 57–77, 90–110, 146–166, 181–201, 224–244, 270–290, and 307–327; these read FLSY…PGNL, ELLW…SLAA, YCLW…EGII, LLIG…WVGV, LLIA…MSYV, IALL…ALVL, and YFLI…LAVI. Asparagine 338 carries an N-linked (GlcNAc...) asparagine glycan. 5 helical membrane-spanning segments follow: residues 370–390, 409–429, 434–454, 473–493, and 513–533; these read IYAI…TYAG, LVTR…GGSS, LIII…FALI, IYII…NIYY, and VFIG…VIYL. The disordered stretch occupies residues 551–581; the sequence is PQQQANMENGLGPEMERVPYREDLADIPLPE. Residues 564–574 are compositionally biased toward basic and acidic residues; sequence EMERVPYREDL.

It belongs to the NRAMP (TC 2.A.55) family.

It localises to the membrane. Functionally, probable divalent metal transporter. This Populus trichocarpa (Western balsam poplar) protein is Metal transporter Nramp7.1.